A 954-amino-acid polypeptide reads, in one-letter code: Kinesin-like protein KIN-14Q (954 aa).

Residues 33 to 155 (AMRRYDAASW…CVLALKSFSE (123 aa)) enclose the Calponin-homology (CH) domain. Residues 374–699 (NIRVYCRVRP…LKFAERVASV (326 aa)) form the Kinesin motor domain. 457-464 (GQTGSGKT) contacts ATP. Residues 704-733 (AKANKEGSEVRELKEQIATLKAALAKKEGE) adopt a coiled-coil conformation. The span at 844–855 (YDPDKQRRRAEP) shows a compositional bias: basic and acidic residues. 2 disordered regions span residues 844–876 (YDPD…DQEM) and 912–954 (PNLA…NTPK). Residues 864–873 (FDAATSSPSD) are compositionally biased toward low complexity. The segment covering 928 to 954 (PIRNSKQLPFSTTGGRRTRNGKINTPK) has biased composition (polar residues).

Belongs to the TRAFAC class myosin-kinesin ATPase superfamily. Kinesin family. KIN-14 subfamily. As to quaternary structure, forms oligomers in vitro. Interacts with actin microfilaments. Binds to actin in vitro through its calponin-homology (CH) domain. As to expression, expressed in primary leaf, primary root, developing flower and coleoptile.

The protein localises to the cytoplasm. It is found in the cytoskeleton. Its activity is regulated as follows. The microtubule-dependent ATPase activity is regulated by actin binding. Its function is as follows. Minus end-directed motor protein that transports actin filaments along microtubules. Plays a central role in the polar orientation of actin filaments along microtubules, and thus a contribution to the organization of the cytoskeletal architecture. Links the actin microfilaments with the cortical microtubules in both cycling and non-cycling cells. Required for efficient cell elongation by its participation in the premitotic nuclear positioning. The protein is Kinesin-like protein KIN-14Q of Oryza sativa subsp. japonica (Rice).